Here is a 217-residue protein sequence, read N- to C-terminus: ATP phosphoribosyltransferase (217 aa).

The protein belongs to the ATP phosphoribosyltransferase family. Short subfamily. As to quaternary structure, heteromultimer composed of HisG and HisZ subunits.

It localises to the cytoplasm. The catalysed reaction is 1-(5-phospho-beta-D-ribosyl)-ATP + diphosphate = 5-phospho-alpha-D-ribose 1-diphosphate + ATP. It participates in amino-acid biosynthesis; L-histidine biosynthesis; L-histidine from 5-phospho-alpha-D-ribose 1-diphosphate: step 1/9. Its function is as follows. Catalyzes the condensation of ATP and 5-phosphoribose 1-diphosphate to form N'-(5'-phosphoribosyl)-ATP (PR-ATP). Has a crucial role in the pathway because the rate of histidine biosynthesis seems to be controlled primarily by regulation of HisG enzymatic activity. The polypeptide is ATP phosphoribosyltransferase (Burkholderia multivorans (strain ATCC 17616 / 249)).